The following is a 106-amino-acid chain: Transcriptional and immune response regulator (106 aa).

As to quaternary structure, monomer. Interacts with NOTCH2 (via ANK repeats), the interaction inhibits the nuclear translocation of NOTCH2 N2ICD. Interacts (C-terminus) with CBY1 (C-terminus), TCIM competes with CTNNB1 for the interaction with CBY1. In terms of tissue distribution, expressed in liver, expression levels decrease in regenerating liver. In bone marrow, expressed in large progenitor-like cells, cells with ring-shaped nuclei and, at lower, levels in hematopietic stem cell-like cells with round nuclei (at protein level).

The protein localises to the cytoplasm. Its subcellular location is the nucleus. The protein resides in the nucleolus. It is found in the nucleus speckle. In terms of biological role, seems to be involved in the regulation of cell growth an differentiation, may play different and opposite roles depending on the tissue or cell type. May enhance the WNT-CTNNB1 pathway by relieving antagonistic activity of CBY1. Enhances the proliferation of follicular dendritic cells. Plays a role in the mitogen-activated MAPK2/3 signaling pathway, positively regulates G1-to-S-phase transition of the cell cycle. In endothelial cells, enhances key inflammatory mediators and inflammatory response through the modulation of NF-kappaB transcriptional regulatory activity. Involved in the regulation of heat shock response, seems to play a positive feedback with HSF1 to modulate heat-shock downstream gene expression. Plays a role in the regulation of hematopoiesis even if the mechanisms are unknown. In cancers such as thyroid or lung cancer, it has been described as promoter of cell proliferation, G1-to-S-phase transition and inhibitor of apoptosis. However, it negatively regulates self-renewal of liver cancer cells via suppresion of NOTCH2 signaling. The polypeptide is Transcriptional and immune response regulator (Mus musculus (Mouse)).